Reading from the N-terminus, the 137-residue chain is Peptide methionine sulfoxide reductase MsrB (137 aa).

One can recognise a MsrB domain in the interval 7–129 (AEELKKKLSE…NSASLAFSDE (123 aa)). 4 residues coordinate Zn(2+): Cys46, Cys49, Cys95, and Cys98. Cys118 (nucleophile) is an active-site residue.

This sequence belongs to the MsrB Met sulfoxide reductase family. It depends on Zn(2+) as a cofactor.

The enzyme catalyses L-methionyl-[protein] + [thioredoxin]-disulfide + H2O = L-methionyl-(R)-S-oxide-[protein] + [thioredoxin]-dithiol. The sequence is that of Peptide methionine sulfoxide reductase MsrB from Salmonella agona (strain SL483).